We begin with the raw amino-acid sequence, 264 residues long: LIMR family protein SELMODRAFT_416716 (264 aa).

4 consecutive transmembrane segments (helical) span residues valine 23 to tyrosine 43, isoleucine 96 to alanine 116, isoleucine 194 to leucine 214, and tryptophan 225 to isoleucine 245.

Belongs to the LIMR family.

It localises to the membrane. The protein is LIMR family protein SELMODRAFT_416716 of Selaginella moellendorffii (Spikemoss).